Consider the following 1001-residue polypeptide: Open rectifier potassium channel protein 1 (1001 aa).

The Cytoplasmic portion of the chain corresponds to 1-6 (MSPNRW). Residues 7 to 27 (ILLLIFYISYLMFGAAIYYHI) form a helical membrane-spanning segment. Residue asparagine 58 is glycosylated (N-linked (GlcNAc...) asparagine). The pore-forming intramembrane region spans 95-111 (AFFFAFTVCSTVGYGNI). A helical membrane pass occupies residues 120–140 (MIMIAYSVIGIPVNGILFAGL). Residues 141-170 (GEYFGRTFEAIYRRYKKYKMSTDMHYVPPQ) lie on the Cytoplasmic side of the membrane. The chain crosses the membrane as a helical span at residues 171 to 191 (LGLITTVVIALIPGIALFLLL). Residues 208–224 (LYYSYVTTTTIGFGDYV) constitute an intramembrane region (pore-forming). A helical membrane pass occupies residues 244-264 (IFVIVWFIFSLGYLVMIMTFI). Topologically, residues 265-1001 (TRGLQSKKLA…TGSSGAPAEK (737 aa)) are cytoplasmic. Phosphoserine occurs at positions 332, 373, 562, and 565. The tract at residues 591 to 668 (SQSYLRNGRG…QAPSARRGSM (78 aa)) is disordered. 3 positions are modified to phosphoserine: serine 685, serine 691, and serine 715. 2 disordered regions span residues 768 to 795 (GGAAGGGGISRGSRKQRKMGNAGLEPPQ) and 830 to 1001 (SPTG…PAEK). Over residues 832–841 (TGGAATAPAA) the composition is skewed to low complexity. Residues 855–873 (AANQSQITAGPSNAPTVQS) show a composition bias toward polar residues. A compositionally biased stretch (low complexity) spans 911–926 (RRLSLRPSPLARELSP). The span at 961-983 (RPSTSSTHSPLSRIVQISQAQRK) shows a compositional bias: polar residues. Residues 984 to 1001 (SSMPSAAATGSSGAPAEK) show a composition bias toward low complexity.

This sequence belongs to the two pore domain potassium channel (TC 1.A.1.8) family. In terms of tissue distribution, widespread expression in adult, strongest expression in muscle, brain and ovary. Also present at low levels in larva and embryo.

The protein resides in the membrane. In terms of biological role, background potassium channel. Rectification is dependent on external potassium concentration. Acts as an outwardly rectifying channel but as external potassium levels increase, this is reversed. The polypeptide is Open rectifier potassium channel protein 1 (Ork1) (Drosophila melanogaster (Fruit fly)).